The primary structure comprises 580 residues: Mucolipin-1 (580 aa).

The interval 1 to 38 (MATPAGRRASETERLLTPNPGYGTQVGTSPAPTTPTEE) is disordered. The Cytoplasmic segment spans residues 1 to 65 (MATPAGRRAS…FRAKGRKPCK (65 aa)). At serine 10 the chain carries Phosphoserine. A Dileucine motif; mediates targeting to lysosomes motif is present at residues 11–16 (ETERLL). Residues 42–62 (RRRLKYFFMSPCDKFRAKGRK) form an interaction with phosphoinositides region. Residues 66–86 (LMLQVVKILVVTVQLILFGLS) traverse the membrane as a helical segment. The Extracellular segment spans residues 87–298 (NQLVVTFREE…VSRHGDNSFR (212 aa)). The segment at 107–121 (LGYSDGSDDTFAAYT) is extracellular/lumenal pore loop. Residues cysteine 166 and cysteine 192 are joined by a disulfide bond. N-linked (GlcNAc...) asparagine glycans are attached at residues asparagine 220 and asparagine 230. Cysteine 253 and cysteine 284 form a disulfide bridge. Residues 299-321 (LLFDVVVILTCSLSFLLCARSLL) form a helical membrane-spanning segment. Residues 322 to 350 (RGFLLQNEFVVFMWRRRGREISLWERLEF) are Cytoplasmic-facing. Residues 351–371 (VNGWYILLVTSDVLTISGTVM) traverse the membrane as a helical segment. At 372 to 382 (KIGIEAKNLAS) the chain is on the extracellular side. Residues 383 to 405 (YDVCSILLGTSTLLVWVGVIRYL) traverse the membrane as a helical segment. Residues 406–427 (TFFHKYNILIATLRVALPSVMR) are Cytoplasmic-facing. The helical transmembrane segment at 428–448 (FCCCVAVIYLGYCFCGWIVLG) threads the bilayer. Residues 449-456 (PYHVKFRS) lie on the Extracellular side of the membrane. The segment at residues 457-477 (LSMVSECLFSLINGDDMFVTF) is an intramembrane region (pore-forming). The short motif at 469–474 (NGDDMF) is the Selectivity filter element. The Extracellular segment spans residues 478–491 (AAMQAQQGHSSLVW). Residues 492–513 (LFSQLYLYSFISLFIYMVLSLF) form a helical membrane-spanning segment. Residues 514–580 (IALITGAYDT…SPEDHSLLVN (67 aa)) are Cytoplasmic-facing. Serine 557 is subject to Phosphoserine. At serine 559 the chain carries Phosphoserine; by PAK. The required for palmitoylation and association with membranes stretch occupies residues 565–567 (CCC). A Dileucine internalization motif; mediates AP2 complex-dependent internalization motif is present at residues 573–578 (EDHSLL).

The protein belongs to the transient receptor (TC 1.A.4) family. Polycystin subfamily. MCOLN1 sub-subfamily. Homotetramer. Homooligomer. Can heterooligomerize with MCOLN2 or MCOLN3; heteromeric assemblies have different channel properties as compared to the respective homooligomers and may be tissue-specific. Interacts with PDCD6. Interacts with TMEM163. Interacts with LAPTM4B. In terms of processing, palmitoylated; involved in association with membranes. Phosphorylation by PKA inhibits channel activity. Dephosphorylation increases activity. Post-translationally, proteolytically cleaved probably involving multiple lysosomal proteases including cathepsin B; inhibits lysosomal channel activity. As to expression, widely expressed, with the highest expression in brain, liver and kidney.

Its subcellular location is the late endosome membrane. It localises to the lysosome membrane. It is found in the cytoplasmic vesicle membrane. The protein localises to the cell projection. The protein resides in the phagocytic cup. Its subcellular location is the cytoplasmic vesicle. It localises to the phagosome membrane. It is found in the cell membrane. It catalyses the reaction Ca(2+)(in) = Ca(2+)(out). The catalysed reaction is Fe(2+)(in) = Fe(2+)(out). It carries out the reaction Mg(2+)(in) = Mg(2+)(out). The enzyme catalyses K(+)(in) = K(+)(out). It catalyses the reaction Na(+)(in) = Na(+)(out). With respect to regulation, channel activity is controlled by multiple regulatory mechanisms in different subcellular compartments. Lower pH by itself has an inhibitory effect on channel conductance. Channel function is transiently modulated by changes in Ca(2+) in a pH-dependent manner; pH changes modify the aggregation state of unitary channels; a negative cooperativity between extracellular/lumenal Ca(2+) and H(+) is suggested. Fe(2+) channel activity is potentiated by low pH. Regulated by phosphoinositides in a compartment-specific manner: in lysosomes activated by PtdIns(3,5)P2 (Phosphatidylinositol 3,5-bisphosphate) and at the plasma membrane inhibited by PtdIns(4,5)P2 (Phosphatidylinositol 4,5-bisphosphate). Its function is as follows. Nonselective cation channel probably playing a role in the regulation of membrane trafficking events and of metal homeostasis. Acts as a Ca(2+)-permeable cation channel with inwardly rectifying activity. Proposed to play a major role in Ca(2+) release from late endosome and lysosome vesicles to the cytoplasm, which is important for many lysosome-dependent cellular events, including the fusion and trafficking of these organelles, exocytosis and autophagy. Required for efficient uptake of large particles in macrophages in which Ca(2+) release from the lysosomes triggers lysosomal exocytosis. May also play a role in phagosome-lysosome fusion. Involved in lactosylceramide trafficking indicative for a role in the regulation of late endocytic membrane fusion/fission events. By mediating lysosomal Ca(2+) release is involved in regulation of mTORC1 signaling and in mTOR/TFEB-dependent lysosomal adaptation to environmental cues such as nutrient levels. Seems to act as lysosomal active oxygen species (ROS) sensor involved in ROS-induced TFEB activation and autophagy. Also functions as a Fe(2+) permeable channel in late endosomes and lysosomes. Also permeable to Mg(2+), Na(+). K(+) and Cs(+). Proposed to play a role in zinc homeostasis probably implicating its association with TMEM163. In adaptive immunity, TRPML2 and TRPML1 may play redundant roles in the function of the specialized lysosomes of B cells. May contribute to cellular lipase activity within the late endosomal pathway or at the cell surface which may be involved in processes of membrane reshaping and vesiculation, especially the growth of tubular structures. However, it is not known, whether it conveys the enzymatic activity directly, or merely facilitates the activity of an associated phospholipase. This chain is Mucolipin-1, found in Mus musculus (Mouse).